The primary structure comprises 257 residues: Dihydroorotate dehydrogenase B (NAD(+)), electron transfer subunit (257 aa).

The 101-residue stretch at 2–102 folds into the FAD-binding FR-type domain; sequence IGRERMTVAS…LGPLGNGFPL (101 aa). Residues 53–56, 70–72, and 77–78 contribute to the FAD site; these read RPLS, IYR, and GT. Positions 221, 226, 229, and 244 each coordinate [2Fe-2S] cluster.

This sequence belongs to the PyrK family. Heterotetramer of 2 PyrK and 2 PyrD type B subunits. It depends on [2Fe-2S] cluster as a cofactor. FAD is required as a cofactor.

It functions in the pathway pyrimidine metabolism; UMP biosynthesis via de novo pathway; orotate from (S)-dihydroorotate (NAD(+) route): step 1/1. Responsible for channeling the electrons from the oxidation of dihydroorotate from the FMN redox center in the PyrD type B subunit to the ultimate electron acceptor NAD(+). The protein is Dihydroorotate dehydrogenase B (NAD(+)), electron transfer subunit of Bacillus caldolyticus.